The primary structure comprises 71 residues: Serine palmitoyltransferase small subunit A (71 aa).

Topologically, residues 1 to 12 are cytoplasmic; it reads MAGMALARAWKQ. A helical membrane pass occupies residues 13–29; it reads MSWFYYQYLLVTALYML. The Lumenal portion of the chain corresponds to 30–34; the sequence is EPWER. Residues 35 to 57 traverse the membrane as a helical segment; that stretch reads TVFNSMLVSIVGMALYTGYVFMP. Residues 58 to 71 lie on the Cytoplasmic side of the membrane; the sequence is QHIMAILHYFEIVQ.

This sequence belongs to the SPTSS family. SPTSSA subfamily. As to quaternary structure, component of the serine palmitoyltransferase (SPT) complex, which is composed of SPTLC1, SPTLC2 or SPTLC3 and SPTSSA or SPTSSB. The heterodimer consisting of SPTLC1 and SPTLC2/SPTLC3 forms the catalytic core of the enzyme, while SPTSSA or SPTSSB subunits determine substrate specificity. SPT also interacts with ORMDL proteins, especially ORMDL3, which negatively regulate SPT activity in the presence of ceramides. Interacts with MBOAT7; the interaction plays a role in MBOAT7 localization to mitochondria-associated membranes.

Its subcellular location is the endoplasmic reticulum membrane. It participates in lipid metabolism; sphingolipid metabolism. Functionally, component of the serine palmitoyltransferase multisubunit enzyme (SPT) that catalyzes the initial and rate-limiting step in sphingolipid biosynthesis by condensing L-serine and activated acyl-CoA (most commonly palmitoyl-CoA) to form long-chain bases. The SPT complex is composed of SPTLC1, SPTLC2 or SPTLC3 and SPTSSA or SPTSSB. Within this complex, the heterodimer consisting of SPTLC1 and SPTLC2/SPTLC3 forms the catalytic core. Within the SPT complex, SPTSSA stimulates the catalytic activity and plays a role in substrate specificity, which depends upon the overall complex composition. The SPTLC1-SPTLC2-SPTSSA complex shows a strong preference for C16-CoA substrate, while the SPTLC1-SPTLC3-SPTSSA isozyme uses both C14-CoA and C16-CoA as substrates, with a slight preference for C14-CoA. Independently of its action as a SPT component, may be involved in MBOAT7 localization to mitochondria-associated membranes, a membrane bridge between the endoplasmic reticulum and mitochondria, may hence affect MBOAT7-catalyzed incorporation of arachidonic acid into phosphatidylinositol. The polypeptide is Serine palmitoyltransferase small subunit A (Homo sapiens (Human)).